We begin with the raw amino-acid sequence, 425 residues long: UPF0597 protein VF_0641 (425 aa).

Belongs to the UPF0597 family.

The chain is UPF0597 protein VF_0641 from Aliivibrio fischeri (strain ATCC 700601 / ES114) (Vibrio fischeri).